A 321-amino-acid polypeptide reads, in one-letter code: Lipoyl synthase (321 aa).

7 residues coordinate [4Fe-4S] cluster: C68, C73, C79, C94, C98, C101, and S308. The Radical SAM core domain maps to 80-297; the sequence is FNHGTATFMI…KAAAMDMGFT (218 aa).

This sequence belongs to the radical SAM superfamily. Lipoyl synthase family. [4Fe-4S] cluster serves as cofactor.

It localises to the cytoplasm. The catalysed reaction is [[Fe-S] cluster scaffold protein carrying a second [4Fe-4S](2+) cluster] + N(6)-octanoyl-L-lysyl-[protein] + 2 oxidized [2Fe-2S]-[ferredoxin] + 2 S-adenosyl-L-methionine + 4 H(+) = [[Fe-S] cluster scaffold protein] + N(6)-[(R)-dihydrolipoyl]-L-lysyl-[protein] + 4 Fe(3+) + 2 hydrogen sulfide + 2 5'-deoxyadenosine + 2 L-methionine + 2 reduced [2Fe-2S]-[ferredoxin]. Its pathway is protein modification; protein lipoylation via endogenous pathway; protein N(6)-(lipoyl)lysine from octanoyl-[acyl-carrier-protein]: step 2/2. In terms of biological role, catalyzes the radical-mediated insertion of two sulfur atoms into the C-6 and C-8 positions of the octanoyl moiety bound to the lipoyl domains of lipoate-dependent enzymes, thereby converting the octanoylated domains into lipoylated derivatives. The sequence is that of Lipoyl synthase from Erwinia tasmaniensis (strain DSM 17950 / CFBP 7177 / CIP 109463 / NCPPB 4357 / Et1/99).